Reading from the N-terminus, the 156-residue chain is Protein-export protein SecB (156 aa).

Belongs to the SecB family. Homotetramer, a dimer of dimers. One homotetramer interacts with 1 SecA dimer.

The protein localises to the cytoplasm. Functionally, one of the proteins required for the normal export of preproteins out of the cell cytoplasm. It is a molecular chaperone that binds to a subset of precursor proteins, maintaining them in a translocation-competent state. It also specifically binds to its receptor SecA. The chain is Protein-export protein SecB from Serratia proteamaculans (strain 568).